Consider the following 291-residue polypeptide: Meteorin (291 aa).

Residues 1–21 (MLVATLLCALCCGLLAASAHA) form the signal peptide. 5 cysteine pairs are disulfide-bonded: Cys-28–Cys-49, Cys-80–Cys-116, Cys-169–Cys-240, Cys-172–Cys-264, and Cys-182–Cys-286.

It belongs to the meteorin family. As to quaternary structure, monomer. Highly expressed in brain. Expressed in undifferentiated neural progenitors and in astrocyte lineage, particularly in Bergmann glia, a subtype of radial glia, and a few discrete neuronal populations residing in the superior colliculus, the ocular motor nucleus, the raphe and pontine nuclei, and in various thalamic nuclei. Weakly expressed in heart, kidney, skeletal muscle, spleen, testis, gut and lung.

It localises to the secreted. Functionally, involved in both glial cell differentiation and axonal network formation during neurogenesis. Promotes astrocyte differentiation and transforms cerebellar astrocytes into radial glia. Also induces axonal extension in small and intermediate neurons of sensory ganglia by activating nearby satellite glia. This is Meteorin (Metrn) from Mus musculus (Mouse).